Here is a 118-residue protein sequence, read N- to C-terminus: MRHRVKKKHFSRTAEQRVALMRSLARSLILFEKIESSEAKLKALRPFVERLITLAKKGDLASRRRALSLLPDKEAIRKLFTELAPRFEGRNGGYTRIVKLPNRKPGDSTELAIIEFVE.

The protein belongs to the bacterial ribosomal protein bL17 family. Part of the 50S ribosomal subunit. Contacts protein L32.

The polypeptide is Large ribosomal subunit protein bL17 (Hydrogenobaculum sp. (strain Y04AAS1)).